A 627-amino-acid polypeptide reads, in one-letter code: BEL1-like homeodomain protein 4 (627 aa).

The disordered stretch occupies residues 206 to 225 (SSQHHHHQVVGHFGSSSSSP). Residues 215–225 (VGHFGSSSSSP) are compositionally biased toward low complexity. The interval 241–257 (SKYTKPAQELLEEFCSV) is SR/KY domain. Residues 263–307 (KKNKLSRNNSNPNTTGGGGGGGSSSSAGTANDSPPLSPADRIEHQ) are disordered. Residues 302-373 (DRIEHQRRKV…CLKDAVAVQL (72 aa)) form a BELL domain region. Positions 424–486 (AWRPQRGLPE…NARVRLWKPM (63 aa)) form a DNA-binding region, homeobox. The interval 494–530 (EAKEREEAEEENENQQQQRRQQQTNNNDTKPNNNENN) is disordered. Low complexity predominate over residues 507 to 530 (NQQQQRRQQQTNNNDTKPNNNENN).

Belongs to the TALE/BELL homeobox family. May form heterodimeric complexes with TALE/KNOX proteins. Interacts with OFP1, OFP2 and OFP5. Interacts with KNATM, isoform KNATM-B. In terms of tissue distribution, expressed in lateral organs.

The protein resides in the nucleus. In terms of biological role, transcription factor that establishes leaf shape by repressing growth in specific subdomains of the leaf. Negatively regulates knox homeobox gene KNAT1/BP expression. The chain is BEL1-like homeodomain protein 4 (BLH4) from Arabidopsis thaliana (Mouse-ear cress).